The following is a 304-amino-acid chain: Dermonecrotic toxin LlSicTox-betaIA1 (304 aa).

Positions 1–21 (MLLSAVISFIGFAAFLQEANG) are cleaved as a signal peptide. Positions 22–26 (HVVER) are excised as a propeptide. Residue histidine 38 is part of the active site. Positions 58 and 60 each coordinate Mg(2+). The active-site Nucleophile is histidine 74. 2 disulfide bridges follow: cysteine 78-cysteine 84 and cysteine 80-cysteine 223. Mg(2+) is bound at residue aspartate 118.

This sequence belongs to the arthropod phospholipase D family. Class II subfamily. Class IIb sub-subfamily. Requires Mg(2+) as cofactor. Expressed by the venom gland.

It is found in the secreted. It carries out the reaction an N-(acyl)-sphingosylphosphocholine = an N-(acyl)-sphingosyl-1,3-cyclic phosphate + choline. The enzyme catalyses an N-(acyl)-sphingosylphosphoethanolamine = an N-(acyl)-sphingosyl-1,3-cyclic phosphate + ethanolamine. The catalysed reaction is a 1-acyl-sn-glycero-3-phosphocholine = a 1-acyl-sn-glycero-2,3-cyclic phosphate + choline. It catalyses the reaction a 1-acyl-sn-glycero-3-phosphoethanolamine = a 1-acyl-sn-glycero-2,3-cyclic phosphate + ethanolamine. Its function is as follows. Dermonecrotic toxins cleave the phosphodiester linkage between the phosphate and headgroup of certain phospholipids (sphingolipid and lysolipid substrates), forming an alcohol (often choline) and a cyclic phosphate. This toxin acts on sphingomyelin (SM) with low activity. It may also act on ceramide phosphoethanolamine (CPE), lysophosphatidylcholine (LPC) and lysophosphatidylethanolamine (LPE), but not on lysophosphatidylserine (LPS), and lysophosphatidylglycerol (LPG). It acts by transphosphatidylation, releasing exclusively cyclic phosphate products as second products. Induces hemolysis, dermonecrosis, and edema. Also induces platelet aggregation. In Loxosceles laeta (South American recluse spider), this protein is Dermonecrotic toxin LlSicTox-betaIA1.